Here is a 450-residue protein sequence, read N- to C-terminus: Exodeoxyribonuclease 7 large subunit (450 aa).

Belongs to the XseA family. In terms of assembly, heterooligomer composed of large and small subunits.

Its subcellular location is the cytoplasm. It carries out the reaction Exonucleolytic cleavage in either 5'- to 3'- or 3'- to 5'-direction to yield nucleoside 5'-phosphates.. In terms of biological role, bidirectionally degrades single-stranded DNA into large acid-insoluble oligonucleotides, which are then degraded further into small acid-soluble oligonucleotides. The chain is Exodeoxyribonuclease 7 large subunit from Listeria welshimeri serovar 6b (strain ATCC 35897 / DSM 20650 / CCUG 15529 / CIP 8149 / NCTC 11857 / SLCC 5334 / V8).